A 241-amino-acid chain; its full sequence is Glycerol-3-phosphate acyltransferase (241 aa).

Helical transmembrane passes span 3–23 (ILYSILINLALFLLGYLLLGS), 63–83 (IVFATDVLKTLLPILIISAIV), 97–117 (YISPQALGLGVVIGHIFPAYY), 131–151 (LIISINIILFLIAFLIFLLVV), 156–176 (IVSLGSITVAFSLLLFVWMPW), and 198–218 (LVNYWYVSPIIYTLCAFLVLV).

The protein belongs to the PlsY family. Probably interacts with PlsX.

The protein resides in the cell membrane. The enzyme catalyses an acyl phosphate + sn-glycerol 3-phosphate = a 1-acyl-sn-glycero-3-phosphate + phosphate. Its pathway is lipid metabolism; phospholipid metabolism. In terms of biological role, catalyzes the transfer of an acyl group from acyl-phosphate (acyl-PO(4)) to glycerol-3-phosphate (G3P) to form lysophosphatidic acid (LPA). This enzyme utilizes acyl-phosphate as fatty acyl donor, but not acyl-CoA or acyl-ACP. This Mycoplasmopsis agalactiae (strain NCTC 10123 / CIP 59.7 / PG2) (Mycoplasma agalactiae) protein is Glycerol-3-phosphate acyltransferase.